Here is a 58-residue protein sequence, read N- to C-terminus: MSPQTETKASVGFKAGVKDYKLTYYTPEYETKDTDILAAFRVTPQPGVPPEEAGQAVA.

A propeptide spanning residues 1-2 (MS) is cleaved from the precursor. Pro3 bears the N-acetylproline mark. Position 14 is an N6,N6,N6-trimethyllysine (Lys14).

It belongs to the RuBisCO large chain family. Type I subfamily. In terms of assembly, heterohexadecamer of 8 large chains and 8 small chains.

The protein localises to the plastid. It is found in the chloroplast. It catalyses the reaction 2 (2R)-3-phosphoglycerate + 2 H(+) = D-ribulose 1,5-bisphosphate + CO2 + H2O. The enzyme catalyses D-ribulose 1,5-bisphosphate + O2 = 2-phosphoglycolate + (2R)-3-phosphoglycerate + 2 H(+). In terms of biological role, ruBisCO catalyzes two reactions: the carboxylation of D-ribulose 1,5-bisphosphate, the primary event in carbon dioxide fixation, as well as the oxidative fragmentation of the pentose substrate in the photorespiration process. Both reactions occur simultaneously and in competition at the same active site. The sequence is that of Ribulose bisphosphate carboxylase large chain (rbcL) from Rosa damascena (Damask rose).